We begin with the raw amino-acid sequence, 240 residues long: Eukaryotic translation initiation factor 3 subunit J (240 aa).

Residues 1–66 (MADDWESAAD…VPVKTKPSKA (66 aa)) form a disordered region. Over residues 27–45 (GEDDDDDVKESWEDEEEKK) the composition is skewed to acidic residues.

The protein belongs to the eIF-3 subunit J family. In terms of assembly, component of the eukaryotic translation initiation factor 3 (eIF-3) complex. The eIF-3 complex interacts with pix.

Its subcellular location is the cytoplasm. Its function is as follows. Component of the eukaryotic translation initiation factor 3 (eIF-3) complex, which is involved in protein synthesis of a specialized repertoire of mRNAs and, together with other initiation factors, stimulates binding of mRNA and methionyl-tRNAi to the 40S ribosome. The eIF-3 complex specifically targets and initiates translation of a subset of mRNAs involved in cell proliferation. The polypeptide is Eukaryotic translation initiation factor 3 subunit J (Drosophila persimilis (Fruit fly)).